The chain runs to 169 residues: Ribosome maturation factor RimP (169 aa).

This sequence belongs to the RimP family.

The protein resides in the cytoplasm. Required for maturation of 30S ribosomal subunits. The polypeptide is Ribosome maturation factor RimP (Pseudomonas putida (strain W619)).